A 275-amino-acid polypeptide reads, in one-letter code: 3-oxo-isoapionate decarboxylase (275 aa).

It carries out the reaction 3-oxoisoapionate + H(+) = L-erythrulose + CO2. Its pathway is carbohydrate metabolism. In terms of biological role, involved in catabolism of D-apiose. Catalyzes decarboxylation of 3-oxo-isoapionate to L-erythrulose. This chain is 3-oxo-isoapionate decarboxylase, found in Pectobacterium atrosepticum (strain SCRI 1043 / ATCC BAA-672) (Erwinia carotovora subsp. atroseptica).